Here is a 325-residue protein sequence, read N- to C-terminus: MARPVSERTPAPLLLGGPTGAPPGGGALLGLRSLLQGTSKPKEPTSCLLKEKERKASPPAATVPGPGLETAGPADASAGAVVGGGSPRGRPGAAPGPGLLAPLLWERTLPFGDVEYVDLDAFLLEHGLPPSPPPPGGPSPAPSPVRTPAPSPRPGSCGSASPRSSPGHAPARAALGAAGGHRAGLTSRDTPSPVDPDTVEVLMTFEPDPADLALSSIPGHETFDPRRHRFSEEELKPQPIMKKARKIQVPEEQKDEKYWSRRYKNNEAAKRSRDARRLKENQISVRAAFLEKENALLRQEVVAVRQELSHYRAVLSRYQAQHGAL.

Disordered regions lie at residues methionine 1 to leucine 100, leucine 124 to threonine 198, and leucine 212 to aspartate 255. Positions glycine 17–leucine 28 are enriched in gly residues. 2 stretches are compositionally biased toward low complexity: residues leucine 29–threonine 38 and alanine 71–alanine 80. The residue at position 86 (serine 86) is a Phosphoserine. The span at arginine 88–leucine 100 shows a compositional bias: low complexity. A compositionally biased stretch (pro residues) spans proline 129–arginine 153. Positions proline 166–glycine 176 are enriched in low complexity. Residues glutamate 221–lysine 236 show a composition bias toward basic and acidic residues. The bZIP domain occupies aspartate 255–tyrosine 318. A basic motif region spans residues lysine 257–lysine 279. A leucine-zipper region spans residues isoleucine 283 to leucine 297.

Belongs to the bZIP family. PAR subfamily. Binds DNA as a homodimer or a heterodimer. Can form a heterodimer with TEF.

It is found in the nucleus. Its function is as follows. This transcriptional activator recognizes and binds to the sequence 5'-RTTAYGTAAY-3' found in the promoter of genes such as albumin, CYP2A4 and CYP2A5. It is not essential for circadian rhythm generation, but modulates important clock output genes. May be a direct target for regulation by the circadian pacemaker component clock. May affect circadian period and sleep regulation. This chain is D site-binding protein (DBP), found in Bos taurus (Bovine).